The primary structure comprises 526 residues: Bifunctional purine biosynthesis protein PurH (526 aa).

The MGS-like domain maps to 1–147; the sequence is MSSIKRALIS…KNWKHVAIVT (147 aa).

This sequence belongs to the PurH family.

The enzyme catalyses (6R)-10-formyltetrahydrofolate + 5-amino-1-(5-phospho-beta-D-ribosyl)imidazole-4-carboxamide = 5-formamido-1-(5-phospho-D-ribosyl)imidazole-4-carboxamide + (6S)-5,6,7,8-tetrahydrofolate. It catalyses the reaction IMP + H2O = 5-formamido-1-(5-phospho-D-ribosyl)imidazole-4-carboxamide. It participates in purine metabolism; IMP biosynthesis via de novo pathway; 5-formamido-1-(5-phospho-D-ribosyl)imidazole-4-carboxamide from 5-amino-1-(5-phospho-D-ribosyl)imidazole-4-carboxamide (10-formyl THF route): step 1/1. Its pathway is purine metabolism; IMP biosynthesis via de novo pathway; IMP from 5-formamido-1-(5-phospho-D-ribosyl)imidazole-4-carboxamide: step 1/1. In Neisseria meningitidis serogroup B (strain ATCC BAA-335 / MC58), this protein is Bifunctional purine biosynthesis protein PurH.